The chain runs to 145 residues: Transcription antitermination protein NusB (145 aa).

Belongs to the NusB family.

In terms of biological role, involved in transcription antitermination. Required for transcription of ribosomal RNA (rRNA) genes. Binds specifically to the boxA antiterminator sequence of the ribosomal RNA (rrn) operons. This is Transcription antitermination protein NusB from Burkholderia mallei (strain NCTC 10247).